Reading from the N-terminus, the 338-residue chain is Phosphatidate cytidylyltransferase, mitochondrial (338 aa).

Belongs to the TAM41 family. Mg(2+) serves as cofactor.

The protein localises to the mitochondrion inner membrane. The enzyme catalyses a 1,2-diacyl-sn-glycero-3-phosphate + CTP + H(+) = a CDP-1,2-diacyl-sn-glycerol + diphosphate. It participates in phospholipid metabolism; CDP-diacylglycerol biosynthesis; CDP-diacylglycerol from sn-glycerol 3-phosphate: step 3/3. Catalyzes the conversion of phosphatidic acid (PA) to CDP-diacylglycerol (CDP-DAG), an essential intermediate in the synthesis of phosphatidylglycerol, cardiolipin and phosphatidylinositol. This Danio rerio (Zebrafish) protein is Phosphatidate cytidylyltransferase, mitochondrial (tamm41).